Here is a 340-residue protein sequence, read N- to C-terminus: Cytochrome c oxidase subunit 1 (340 aa).

The chain crosses the membrane as a helical span at residues 18 to 38; the sequence is MCYLLVAILCGFLGYIYSLFI. Glu-41 and Gly-46 together coordinate Ca(2+). The chain crosses the membrane as a helical span at residues 42 to 62; sequence LSIIGCGVLFGDYQYYNVLVT. His-64 lines the Fe(II)-heme a pocket. Helical transmembrane passes span 66–86, 100–120, 148–168, 186–206, 237–257, 279–299, and 305–325; these read LVMVFAFIMPVMMGGLVNYFV, LNNMSFWMFMGGFGALVSGLL, FTVFAVHLLGVSSILNSINLL, LFIWGSLITALLLIITLPVLA, LFWFFGHPEVYIIIIPVFGLI, MILIAILGFFVWAHHMFVVGM, and AYFGSVTVLIGLPTCIKLFNW. His-243 serves as a coordination point for Cu cation. A cross-link (1'-histidyl-3'-tyrosine (His-Tyr)) is located at residues 243–247; sequence HPEVY. Tyr-247 serves as a coordination point for O2. His-292 and His-293 together coordinate Cu cation.

This sequence belongs to the heme-copper respiratory oxidase family. Component of the cytochrome c oxidase (complex IV, CIV), a multisubunit enzyme composed of a catalytic core of 3 subunits and several supernumerary subunits. The complex exists as a monomer or a dimer and forms supercomplexes (SCs) in the inner mitochondrial membrane with ubiquinol-cytochrome c oxidoreductase (cytochrome b-c1 complex, complex III, CIII). The cofactor is heme. Requires Cu cation as cofactor.

It is found in the mitochondrion inner membrane. It carries out the reaction 4 Fe(II)-[cytochrome c] + O2 + 8 H(+)(in) = 4 Fe(III)-[cytochrome c] + 2 H2O + 4 H(+)(out). Its pathway is energy metabolism; oxidative phosphorylation. In terms of biological role, component of the cytochrome c oxidase, the last enzyme in the mitochondrial electron transport chain which drives oxidative phosphorylation. The respiratory chain contains 3 multisubunit complexes succinate dehydrogenase (complex II, CII), ubiquinol-cytochrome c oxidoreductase (cytochrome b-c1 complex, complex III, CIII) and cytochrome c oxidase (complex IV, CIV), that cooperate to transfer electrons derived from NADH and succinate to molecular oxygen, creating an electrochemical gradient over the inner membrane that drives transmembrane transport and the ATP synthase. Cytochrome c oxidase is the component of the respiratory chain that catalyzes the reduction of oxygen to water. Electrons originating from reduced cytochrome c in the intermembrane space (IMS) are transferred via the dinuclear copper A center (CU(A)) of subunit 2 and heme A of subunit 1 to the active site in subunit 1, a binuclear center (BNC) formed by heme A3 and copper B (CU(B)). The BNC reduces molecular oxygen to 2 water molecules using 4 electrons from cytochrome c in the IMS and 4 protons from the mitochondrial matrix. The polypeptide is Cytochrome c oxidase subunit 1 (COI) (Strigomonas oncopelti (Parasitic flagellate)).